Reading from the N-terminus, the 461-residue chain is Serine--tRNA ligase (461 aa).

A disordered region spans residues 112 to 134 (EVPFGRDENDNREHHTFGEKPRF). Residues 114–134 (PFGRDENDNREHHTFGEKPRF) show a composition bias toward basic and acidic residues. 252–254 (TAE) contributes to the L-serine binding site. Residue 283–285 (RAE) participates in ATP binding. Residue Glu-306 participates in L-serine binding. 370-373 (EISS) lines the ATP pocket. Ser-406 contributes to the L-serine binding site.

The protein belongs to the class-II aminoacyl-tRNA synthetase family. Type-1 seryl-tRNA synthetase subfamily. In terms of assembly, homodimer. The tRNA molecule binds across the dimer.

The protein resides in the cytoplasm. It catalyses the reaction tRNA(Ser) + L-serine + ATP = L-seryl-tRNA(Ser) + AMP + diphosphate + H(+). The enzyme catalyses tRNA(Sec) + L-serine + ATP = L-seryl-tRNA(Sec) + AMP + diphosphate + H(+). The protein operates within aminoacyl-tRNA biosynthesis; selenocysteinyl-tRNA(Sec) biosynthesis; L-seryl-tRNA(Sec) from L-serine and tRNA(Sec): step 1/1. In terms of biological role, catalyzes the attachment of serine to tRNA(Ser). Is also able to aminoacylate tRNA(Sec) with serine, to form the misacylated tRNA L-seryl-tRNA(Sec), which will be further converted into selenocysteinyl-tRNA(Sec). This chain is Serine--tRNA ligase, found in Methylocella silvestris (strain DSM 15510 / CIP 108128 / LMG 27833 / NCIMB 13906 / BL2).